A 286-amino-acid polypeptide reads, in one-letter code: Phosphoribosylaminoimidazole-succinocarboxamide synthase (286 aa).

It belongs to the SAICAR synthetase family.

It catalyses the reaction 5-amino-1-(5-phospho-D-ribosyl)imidazole-4-carboxylate + L-aspartate + ATP = (2S)-2-[5-amino-1-(5-phospho-beta-D-ribosyl)imidazole-4-carboxamido]succinate + ADP + phosphate + 2 H(+). It functions in the pathway purine metabolism; IMP biosynthesis via de novo pathway; 5-amino-1-(5-phospho-D-ribosyl)imidazole-4-carboxamide from 5-amino-1-(5-phospho-D-ribosyl)imidazole-4-carboxylate: step 1/2. This Pasteurella multocida (strain Pm70) protein is Phosphoribosylaminoimidazole-succinocarboxamide synthase (purC).